Consider the following 180-residue polypeptide: uncharacterized protein (180 aa).

Transmembrane regions (helical) follow at residues Val37–Phe59 and Ala128–Val147.

The protein resides in the cell membrane. This is an uncharacterized protein from Treponema pallidum (strain Nichols).